A 179-amino-acid polypeptide reads, in one-letter code: Gene 49 protein (179 aa).

Disordered regions lie at residues 1 to 38 (MKGN…VTTA) and 102 to 137 (HYAG…GEKR). The span at 18-28 (QPEPAPAPEPE) shows a compositional bias: pro residues. Positions 29–38 (TAPSATVTTA) are enriched in low complexity. Positions 104–119 (AGSGGSAPANGGGGGQ) are enriched in gly residues. The span at 120–132 (QQSRAPQAAQEAP) shows a compositional bias: low complexity.

This is Gene 49 protein (49) from Mycobacterium (Mycobacteriophage L5).